Reading from the N-terminus, the 423-residue chain is COP9 signalosome complex subunit 3 (423 aa).

At alanine 2 the chain carries N-acetylalanine. The region spanning 197–365 is the PCI domain; that stretch reads NFERALYFYE…GMVSFHDNPE (169 aa). Positions 402–423 are disordered; sequence QFVQKSMGSQEDDSGNKPSSYS. Residues serine 407, serine 410, and serine 423 each carry the phosphoserine modification.

The protein belongs to the CSN3 family. In terms of assembly, component of the CSN complex, composed of COPS1/GPS1, COPS2, COPS3, COPS4, COPS5, COPS6, COPS7 (COPS7A or COPS7B), COPS8 and COPS9. In the complex, it probably interacts directly with COPS1, COPS4, COPS8 and COPS9. Interacts with CK2 and PKD. Interacts with the translation initiation factor EIF3S6 and IKBKG. Interacts with ERCC6.

Its subcellular location is the cytoplasm. It localises to the nucleus. Its function is as follows. Component of the COP9 signalosome complex (CSN), a complex involved in various cellular and developmental processes. The CSN complex is an essential regulator of the ubiquitin (Ubl) conjugation pathway by mediating the deneddylation of the cullin subunits of SCF-type E3 ligase complexes, leading to decrease the Ubl ligase activity of SCF-type complexes such as SCF, CSA or DDB2. The complex is also involved in phosphorylation of p53/TP53, c-jun/JUN, IkappaBalpha/NFKBIA, ITPK1 and IRF8/ICSBP, possibly via its association with CK2 and PKD kinases. CSN-dependent phosphorylation of TP53 and JUN promotes and protects degradation by the Ubl system, respectively. Essential to maintain the survival of epiblast cells and thus the development of the postimplantation embryo. This chain is COP9 signalosome complex subunit 3 (COPS3), found in Bos taurus (Bovine).